The chain runs to 205 residues: UPF0316 protein Cthe_2213 (205 aa).

3 helical membrane-spanning segments follow: residues 15 to 37, 44 to 64, and 70 to 90; these read LPLLIFFSRIIDVTIGTIRIIFV, LAPVLGFFEVLVWIMAISQIM, and FVCYFAYAAGFATGTFVGIII.

The protein belongs to the UPF0316 family.

The protein resides in the cell membrane. In Acetivibrio thermocellus (strain ATCC 27405 / DSM 1237 / JCM 9322 / NBRC 103400 / NCIMB 10682 / NRRL B-4536 / VPI 7372) (Clostridium thermocellum), this protein is UPF0316 protein Cthe_2213.